A 411-amino-acid chain; its full sequence is Putative glycosyltransferase SCO3672 (411 aa).

Transmembrane regions (helical) follow at residues isoleucine 7 to leucine 27, proline 45 to glycine 65, valine 70 to leucine 90, glutamate 120 to phenylalanine 140, glycine 148 to glutamate 168, leucine 169 to leucine 189, isoleucine 197 to leucine 217, glycine 227 to leucine 247, glycine 277 to histidine 297, and valine 301 to leucine 321.

This sequence belongs to the glycosyltransferase 4 family.

It is found in the cell membrane. This is Putative glycosyltransferase SCO3672 from Streptomyces coelicolor (strain ATCC BAA-471 / A3(2) / M145).